Consider the following 870-residue polypeptide: Leucine--tRNA ligase (870 aa).

The 'HIGH' region signature appears at 42–52 (PYPSGKLHMGH). The 'KMSKS' region signature appears at 629-633 (KMSKS). An ATP-binding site is contributed by Lys632.

It belongs to the class-I aminoacyl-tRNA synthetase family.

Its subcellular location is the cytoplasm. It carries out the reaction tRNA(Leu) + L-leucine + ATP = L-leucyl-tRNA(Leu) + AMP + diphosphate. This is Leucine--tRNA ligase from Ectopseudomonas mendocina (strain ymp) (Pseudomonas mendocina).